A 595-amino-acid chain; its full sequence is MESDGKSDRTKVPTAASSLNEKKADLNDQPGHSTDTEGNGSDNNNTQVGEKHHVSADDGPVDTAPVELAATQHQHPVEAEQNYPSGLKLTIILLALELAVLCVALDNTIVATAIPEITNQFHALTDVGWYGSAYLLTLCAFQLFFGRLYQLFSIKWVFLSCLFIFEIGSLICGVAPNSTALIVGRAVAGLGAAGIFSGALIIIAFSTPLEKRAIFTALISAIFGISSVIGPLLGGVFTDRVTWRWCFYINLPIGGVTAVALVFFLNIPPREAQPDTNETLRQKIMHFDPIGTAIFLPCIVCILLALQWGGTTYAWSDGRVVALLVLFGVLLITFVGLQFWMGEDATVPVRIVRQRSVGSAAVFTGLVGASFFIMVYYLPIWFQAIRGATATQSGINTLPMMISTTVGNIVGGVFVSFTGYYTPMMYALPPMASVGVGLMTTWTVDVSTGKWIGYQILFGLGLGLGMQQGIVTAQASLPVADTAIGTSLQVFAQMFGGSLFVSVAQNLFSNEVIKGLAAVDELGMTPQAVFNAGATELDNLFGSNPSLLAEVKVVYNDAVIWTFRTALITTCLSVLAVIFVKSGSVKGKKIEMVAA.

Over residues 1 to 11 (MESDGKSDRTK) the composition is skewed to basic and acidic residues. The segment at 1 to 62 (MESDGKSDRT…HVSADDGPVD (62 aa)) is disordered. Residues 30-48 (PGHSTDTEGNGSDNNNTQV) show a composition bias toward polar residues. N-linked (GlcNAc...) asparagine glycans are attached at residues Asn-39 and Asn-44. 3 helical membrane passes run 91–111 (IILLALELAVLCVALDNTIVA), 126–146 (DVGWYGSAYLLTLCAFQLFFG), and 156–176 (WVFLSCLFIFEIGSLICGVAP). An N-linked (GlcNAc...) asparagine glycan is attached at Asn-177. Transmembrane regions (helical) follow at residues 186–206 (AVAGLGAAGIFSGALIIIAFS), 217–237 (ALISAIFGISSVIGPLLGGVF), and 245–265 (WCFYINLPIGGVTAVALVFFL). A glycan (N-linked (GlcNAc...) asparagine) is linked at Asn-277. The next 7 membrane-spanning stretches (helical) occupy residues 290-310 (IGTAIFLPCIVCILLALQWGG), 320-340 (VVALLVLFGVLLITFVGLQFW), 362-382 (VFTGLVGASFFIMVYYLPIWF), 409-429 (IVGGVFVSFTGYYTPMMYALP), 451-471 (WIGYQILFGLGLGLGMQQGIV), 483-503 (AIGTSLQVFAQMFGGSLFVSV), and 559-579 (VIWTFRTALITTCLSVLAVIF).

The protein belongs to the major facilitator superfamily. TCR/Tet family.

It is found in the cell membrane. Functionally, MFS-type transporter; part of the gene cluster that mediates the biosynthesis of the phomopsins, a group of hexapeptide mycotoxins which infects lupins and causes lupinosis disease in livestock. PhomT is likely to be involved in the cellular export of phomopsins. The protein is MFS-type transporter phomT of Diaporthe leptostromiformis (Lupinosis disease fungus).